A 327-amino-acid chain; its full sequence is Phenylalanine--tRNA ligase alpha subunit (327 aa).

Residue Glu-252 participates in Mg(2+) binding.

Belongs to the class-II aminoacyl-tRNA synthetase family. Phe-tRNA synthetase alpha subunit type 1 subfamily. As to quaternary structure, tetramer of two alpha and two beta subunits. The cofactor is Mg(2+).

The protein localises to the cytoplasm. The catalysed reaction is tRNA(Phe) + L-phenylalanine + ATP = L-phenylalanyl-tRNA(Phe) + AMP + diphosphate + H(+). The polypeptide is Phenylalanine--tRNA ligase alpha subunit (Vibrio campbellii (strain ATCC BAA-1116)).